The primary structure comprises 349 residues: tRNA pseudouridine synthase D (349 aa).

Residue Phe27 participates in substrate binding. The active-site Nucleophile is the Asp80. Asn129 contacts substrate. In terms of domain architecture, TRUD spans 155-303; the sequence is GVPNYFGAQR…VEAARRAMLL (149 aa). Phe329 is a substrate binding site.

It belongs to the pseudouridine synthase TruD family.

The catalysed reaction is uridine(13) in tRNA = pseudouridine(13) in tRNA. Its function is as follows. Responsible for synthesis of pseudouridine from uracil-13 in transfer RNAs. The polypeptide is tRNA pseudouridine synthase D (Escherichia coli O6:K15:H31 (strain 536 / UPEC)).